A 327-amino-acid chain; its full sequence is Methionine import ATP-binding protein MetN (327 aa).

The region spanning 3 to 239 is the ABC transporter domain; it reads VELKNIEKIY…PKHAVTKELL (237 aa). 36–43 contacts ATP; sequence GYSGAGKS.

Belongs to the ABC transporter superfamily. Methionine importer (TC 3.A.1.24) family. In terms of assembly, the complex is composed of two ATP-binding proteins (MetN), two transmembrane proteins (MetI) and a solute-binding protein (MetQ).

The protein localises to the cell inner membrane. It catalyses the reaction L-methionine(out) + ATP + H2O = L-methionine(in) + ADP + phosphate + H(+). The catalysed reaction is D-methionine(out) + ATP + H2O = D-methionine(in) + ADP + phosphate + H(+). Its function is as follows. Part of the ABC transporter complex MetNIQ involved in methionine import. Responsible for energy coupling to the transport system. This chain is Methionine import ATP-binding protein MetN, found in Helicobacter pylori (strain ATCC 700392 / 26695) (Campylobacter pylori).